The sequence spans 447 residues: Biotin carboxylase (447 aa).

Positions 1 to 447 constitute a Biotin carboxylation domain; sequence MKFDKILIAN…STSFVQEMNK (447 aa). ATP is bound by residues K117, K159, 165–166, 201–204, and H209; these read GG and EKFI. Residues 121–318 enclose the ATP-grasp domain; the sequence is KETMQKAGVP…LLVEQIRIAQ (198 aa). Position 238 (K238) interacts with hydrogencarbonate. ATP is bound by residues E276 and E289. 3 residues coordinate Mg(2+): E276, E289, and N291. Residues E276, E289, and N291 each contribute to the Mn(2+) site. Positions 293, 296, and 339 each coordinate hydrogencarbonate. Residue R293 is part of the active site. R339 provides a ligand contact to biotin.

Acetyl-CoA carboxylase is a heterohexamer of biotin carboxyl carrier protein, biotin carboxylase and the two subunits of carboxyl transferase in a 2:2 complex. Mg(2+) serves as cofactor. It depends on Mn(2+) as a cofactor.

It catalyses the reaction N(6)-biotinyl-L-lysyl-[protein] + hydrogencarbonate + ATP = N(6)-carboxybiotinyl-L-lysyl-[protein] + ADP + phosphate + H(+). The protein operates within lipid metabolism; malonyl-CoA biosynthesis; malonyl-CoA from acetyl-CoA: step 1/1. In terms of biological role, this protein is a component of the acetyl coenzyme A carboxylase complex; first, biotin carboxylase catalyzes the carboxylation of the carrier protein and then the transcarboxylase transfers the carboxyl group to form malonyl-CoA. The protein is Biotin carboxylase (accC) of Nostoc sp. (strain PCC 7120 / SAG 25.82 / UTEX 2576).